The sequence spans 257 residues: Phosphate import ATP-binding protein PstB (257 aa).

One can recognise an ABC transporter domain in the interval 11-252 (IQVRDLNFYY…PAKKQTEDYI (242 aa)). 43 to 50 (GPSGSGKS) provides a ligand contact to ATP.

It belongs to the ABC transporter superfamily. Phosphate importer (TC 3.A.1.7) family. As to quaternary structure, the complex is composed of two ATP-binding proteins (PstB), two transmembrane proteins (PstC and PstA) and a solute-binding protein (PstS).

The protein resides in the cell inner membrane. The catalysed reaction is phosphate(out) + ATP + H2O = ADP + 2 phosphate(in) + H(+). Functionally, part of the ABC transporter complex PstSACB involved in phosphate import. Responsible for energy coupling to the transport system. The chain is Phosphate import ATP-binding protein PstB from Salmonella choleraesuis (strain SC-B67).